Here is a 361-residue protein sequence, read N- to C-terminus: Biotin synthase (361 aa).

One can recognise a Radical SAM core domain in the interval 47-278 (VHGDEVALCG…AAHIFVMGGR (232 aa)). [4Fe-4S] cluster contacts are provided by Cys65, Cys69, and Cys72. Residues Ser110, Cys143, and Cys203 each contribute to the [2Fe-2S] cluster site.

It belongs to the radical SAM superfamily. Biotin synthase family. Homodimer. The cofactor is [4Fe-4S] cluster. [2Fe-2S] cluster is required as a cofactor.

It catalyses the reaction (4R,5S)-dethiobiotin + (sulfur carrier)-SH + 2 reduced [2Fe-2S]-[ferredoxin] + 2 S-adenosyl-L-methionine = (sulfur carrier)-H + biotin + 2 5'-deoxyadenosine + 2 L-methionine + 2 oxidized [2Fe-2S]-[ferredoxin]. It participates in cofactor biosynthesis; biotin biosynthesis; biotin from 7,8-diaminononanoate: step 2/2. Functionally, catalyzes the conversion of dethiobiotin (DTB) to biotin by the insertion of a sulfur atom into dethiobiotin via a radical-based mechanism. The protein is Biotin synthase of Anaeromyxobacter dehalogenans (strain 2CP-C).